We begin with the raw amino-acid sequence, 340 residues long: DNA-directed RNA polymerase subunit alpha (340 aa).

Positions Met-1 to Asp-238 are alpha N-terminal domain (alpha-NTD). An alpha C-terminal domain (alpha-CTD) region spans residues Ala-253–Ala-340.

The protein belongs to the RNA polymerase alpha chain family. As to quaternary structure, homodimer. The RNAP catalytic core consists of 2 alpha, 1 beta, 1 beta' and 1 omega subunit. When a sigma factor is associated with the core the holoenzyme is formed, which can initiate transcription.

It carries out the reaction RNA(n) + a ribonucleoside 5'-triphosphate = RNA(n+1) + diphosphate. Functionally, DNA-dependent RNA polymerase catalyzes the transcription of DNA into RNA using the four ribonucleoside triphosphates as substrates. This chain is DNA-directed RNA polymerase subunit alpha, found in Myxococcus xanthus (strain DK1622).